The following is a 306-amino-acid chain: Ornithine carbamoyltransferase 1, anabolic (306 aa).

Carbamoyl phosphate is bound by residues 53 to 56 (STRT), glutamine 80, arginine 104, and 131 to 134 (HPCQ). L-ornithine-binding positions include asparagine 162, aspartate 219, and 223–224 (SM). Residues 259–260 (CL) and arginine 287 contribute to the carbamoyl phosphate site.

It belongs to the aspartate/ornithine carbamoyltransferase superfamily. OTCase family. Homotrimer.

The protein localises to the cytoplasm. It carries out the reaction carbamoyl phosphate + L-ornithine = L-citrulline + phosphate + H(+). It participates in amino-acid biosynthesis; L-arginine biosynthesis; L-arginine from L-ornithine and carbamoyl phosphate: step 1/3. With respect to regulation, reversibly inhibited by inhibited by phaseolotoxin and octicidine. Functionally, reversibly catalyzes the transfer of the carbamoyl group from carbamoyl phosphate (CP) to the N(epsilon) atom of ornithine (ORN) to produce L-citrulline, which is a substrate for argininosuccinate synthetase, the enzyme involved in the final step in arginine biosynthesis. In Pseudomonas savastanoi pv. phaseolicola (Pseudomonas syringae pv. phaseolicola), this protein is Ornithine carbamoyltransferase 1, anabolic.